Consider the following 207-residue polypeptide: Thiamine-phosphate synthase (207 aa).

4-amino-2-methyl-5-(diphosphooxymethyl)pyrimidine is bound by residues 35–39 and Asn67; that span reads QYRDK. The Mg(2+) site is built by Asp68 and Asp86. A 4-amino-2-methyl-5-(diphosphooxymethyl)pyrimidine-binding site is contributed by Thr105. 132–134 contributes to the 2-[(2R,5Z)-2-carboxy-4-methylthiazol-5(2H)-ylidene]ethyl phosphate binding site; that stretch reads SVT. Lys135 is a binding site for 4-amino-2-methyl-5-(diphosphooxymethyl)pyrimidine. Gly162 contributes to the 2-[(2R,5Z)-2-carboxy-4-methylthiazol-5(2H)-ylidene]ethyl phosphate binding site.

It belongs to the thiamine-phosphate synthase family. Mg(2+) serves as cofactor.

It carries out the reaction 2-[(2R,5Z)-2-carboxy-4-methylthiazol-5(2H)-ylidene]ethyl phosphate + 4-amino-2-methyl-5-(diphosphooxymethyl)pyrimidine + 2 H(+) = thiamine phosphate + CO2 + diphosphate. The catalysed reaction is 2-(2-carboxy-4-methylthiazol-5-yl)ethyl phosphate + 4-amino-2-methyl-5-(diphosphooxymethyl)pyrimidine + 2 H(+) = thiamine phosphate + CO2 + diphosphate. The enzyme catalyses 4-methyl-5-(2-phosphooxyethyl)-thiazole + 4-amino-2-methyl-5-(diphosphooxymethyl)pyrimidine + H(+) = thiamine phosphate + diphosphate. It participates in cofactor biosynthesis; thiamine diphosphate biosynthesis; thiamine phosphate from 4-amino-2-methyl-5-diphosphomethylpyrimidine and 4-methyl-5-(2-phosphoethyl)-thiazole: step 1/1. In terms of biological role, condenses 4-methyl-5-(beta-hydroxyethyl)thiazole monophosphate (THZ-P) and 2-methyl-4-amino-5-hydroxymethyl pyrimidine pyrophosphate (HMP-PP) to form thiamine monophosphate (TMP). The sequence is that of Thiamine-phosphate synthase from Pseudomonas putida (strain W619).